A 194-amino-acid polypeptide reads, in one-letter code: ATP-dependent Clp protease proteolytic subunit 3 (194 aa).

The active-site Nucleophile is Ser-96. His-121 is a catalytic residue.

It belongs to the peptidase S14 family. Fourteen ClpP subunits assemble into 2 heptameric rings which stack back to back to give a disk-like structure with a central cavity, resembling the structure of eukaryotic proteasomes.

The protein localises to the cytoplasm. It carries out the reaction Hydrolysis of proteins to small peptides in the presence of ATP and magnesium. alpha-casein is the usual test substrate. In the absence of ATP, only oligopeptides shorter than five residues are hydrolyzed (such as succinyl-Leu-Tyr-|-NHMec, and Leu-Tyr-Leu-|-Tyr-Trp, in which cleavage of the -Tyr-|-Leu- and -Tyr-|-Trp bonds also occurs).. Functionally, cleaves peptides in various proteins in a process that requires ATP hydrolysis. Has a chymotrypsin-like activity. Plays a major role in the degradation of misfolded proteins. This is ATP-dependent Clp protease proteolytic subunit 3 from Prochlorococcus marinus (strain NATL2A).